A 322-amino-acid chain; its full sequence is Light-dependent protochlorophyllide reductase (322 aa).

This sequence belongs to the short-chain dehydrogenases/reductases (SDR) family. POR subfamily.

The catalysed reaction is chlorophyllide a + NADP(+) = protochlorophyllide a + NADPH + H(+). Its pathway is porphyrin-containing compound metabolism; chlorophyll biosynthesis. Phototransformation of protochlorophyllide (Pchlide) to chlorophyllide (Chlide). The polypeptide is Light-dependent protochlorophyllide reductase (por) (Synechocystis sp. (strain ATCC 27184 / PCC 6803 / Kazusa)).